A 338-amino-acid chain; its full sequence is Uroporphyrinogen decarboxylase (338 aa).

Substrate contacts are provided by residues 21-25, aspartate 71, tyrosine 146, serine 201, and histidine 316; that span reads RQAGR.

The protein belongs to the uroporphyrinogen decarboxylase family. Homodimer.

It localises to the cytoplasm. It carries out the reaction uroporphyrinogen III + 4 H(+) = coproporphyrinogen III + 4 CO2. The protein operates within porphyrin-containing compound metabolism; protoporphyrin-IX biosynthesis; coproporphyrinogen-III from 5-aminolevulinate: step 4/4. Its function is as follows. Catalyzes the decarboxylation of four acetate groups of uroporphyrinogen-III to yield coproporphyrinogen-III. The protein is Uroporphyrinogen decarboxylase of Rickettsia akari (strain Hartford).